Reading from the N-terminus, the 225-residue chain is Ribonuclease 3 (225 aa).

An RNase III domain is found at 5-127; it reads LDRLQRSLGH…VFAATFLDQG (123 aa). Glu40 serves as a coordination point for Mg(2+). Asp44 is a catalytic residue. Mg(2+) is bound by residues Asp113 and Glu116. Glu116 is a catalytic residue. Positions 154 to 224 constitute a DRBM domain; the sequence is DPKTALQELL…AELALAQLRK (71 aa).

This sequence belongs to the ribonuclease III family. As to quaternary structure, homodimer. The cofactor is Mg(2+).

The protein localises to the cytoplasm. The catalysed reaction is Endonucleolytic cleavage to 5'-phosphomonoester.. Functionally, digests double-stranded RNA. Involved in the processing of primary rRNA transcript to yield the immediate precursors to the large and small rRNAs (23S and 16S). Processes some mRNAs, and tRNAs when they are encoded in the rRNA operon. Processes pre-crRNA and tracrRNA of type II CRISPR loci if present in the organism. The protein is Ribonuclease 3 of Aromatoleum aromaticum (strain DSM 19018 / LMG 30748 / EbN1) (Azoarcus sp. (strain EbN1)).